The primary structure comprises 317 residues: 1D-myo-inositol 2-acetamido-2-deoxy-alpha-D-glucopyranoside deacetylase (317 aa).

Positions 15, 18, and 154 each coordinate Zn(2+). The segment at 289 to 317 is disordered; sequence QDLDNRNPNSQPPADQAREDHLLTGLGFA.

Belongs to the MshB deacetylase family. It depends on Zn(2+) as a cofactor.

It carries out the reaction 1D-myo-inositol 2-acetamido-2-deoxy-alpha-D-glucopyranoside + H2O = 1D-myo-inositol 2-amino-2-deoxy-alpha-D-glucopyranoside + acetate. In terms of biological role, catalyzes the deacetylation of 1D-myo-inositol 2-acetamido-2-deoxy-alpha-D-glucopyranoside (GlcNAc-Ins) in the mycothiol biosynthesis pathway. The chain is 1D-myo-inositol 2-acetamido-2-deoxy-alpha-D-glucopyranoside deacetylase from Segniliparus rotundus (strain ATCC BAA-972 / CDC 1076 / CIP 108378 / DSM 44985 / JCM 13578).